A 120-amino-acid chain; its full sequence is Large ribosomal subunit protein bL17 (120 aa).

Belongs to the bacterial ribosomal protein bL17 family. In terms of assembly, part of the 50S ribosomal subunit. Contacts protein L32.

The chain is Large ribosomal subunit protein bL17 from Desulforapulum autotrophicum (strain ATCC 43914 / DSM 3382 / VKM B-1955 / HRM2) (Desulfobacterium autotrophicum).